We begin with the raw amino-acid sequence, 360 residues long: Putative transport protein BU123 (360 aa).

The next 9 helical transmembrane spans lie at 18–38, 39–59, 66–86, 161–181, 204–224, 230–250, 251–271, 280–300, and 316–336; these read IFIV…ILGF, FWAS…QKIL, AVII…FFLV, GLFI…YWNG, LLLA…TALI, GIGL…IIFF, SCLI…WLYW, ILLI…PFFI, and IGGL…VLVI.

This sequence belongs to the autoinducer-2 exporter (AI-2E) (TC 2.A.86) family.

It localises to the cell membrane. In Buchnera aphidicola subsp. Acyrthosiphon pisum (strain APS) (Acyrthosiphon pisum symbiotic bacterium), this protein is Putative transport protein BU123.